We begin with the raw amino-acid sequence, 683 residues long: MTDALLPANLNAKRLSEQNYFRKGKSIAQTGRSKLQNQRAILNQQILKAMRMRAGAENLLRATANNKIREQVLLELSFVNSNLQRLKEELERLNISVEVYQHTEQASNIPLIPLGLKETKDVDFTTAFKDFILEHYSEDASEYENELADLMDLRQACRTPSRDEAGVELLVSYFQQLGYLENRFFPPSRNIGILFTWYDSFTGVPVSQPNISLEKASILFNIAALYSQIGTRCNRQTKIGLEEAVTTFQKAAGVLNYLKETFTHTPSYDMSPAMLGALIKMLLAEAHECYFEKMILSGIQNEFCTLLKAAQEAAKVSEVHMQVYTLMNQAPIKENVPYSWSVMVQVKAEHYKALANYFVAITLIDYQLNLSDDEDKQEKAISQLYDSMPEGLTAQTILKDQQQRTLLGKAHLSKAIRSHEEAIRFSTLCSTLRQIDVLQLILSAFHQRSLLKFSQHQKPDDFLDLLSAPDIVSKTEYQAETIPPQLSKDKVTDIFQRLGPLSIFSVKQRWSAPRKMCITKEDGDFGFVLKGDCPVQVISLDPLCPAATEGLKEGDYIVSVAGKDCKWCSTSQVMDMLQETGQDSIEIQVISIQDQTNSLANKSATYYAGMQKTYSLVCLTMDNDKNTKTQKATKKLSFLSWGFKNRQKAASTICLPSEVKGKPKTDMVFSFPDNSLSTESALY.

The REM-1 domain maps to 25 to 99 (KSIAQTGRSK…LERLNISVEV (75 aa)). Residues 110 to 501 (PLIPLGLKET…TDIFQRLGPL (392 aa)) form the BRO1 domain. In terms of domain architecture, PDZ spans 515–592 (KMCITKEDGD…DSIEIQVISI (78 aa)).

This sequence belongs to the RHPN family. As to quaternary structure, interacts with RhoA.

The protein resides in the cytoplasm. It is found in the perinuclear region. In terms of biological role, binds specifically to GTP-Rho. The polypeptide is Rhophilin-2-B (rhpn2-b) (Xenopus laevis (African clawed frog)).